The chain runs to 656 residues: Ribosome quality control complex subunit 1 (656 aa).

Residues 1–11 (MSSRALRKLQR) are compositionally biased toward basic residues. Disordered regions lie at residues 1-35 (MSSR…FSST), 51-122 (NNAI…LESS), and 634-656 (LFTS…GQGD). Over residues 17-32 (LLEEALDSESDEDDEF) the composition is skewed to acidic residues. A compositionally biased stretch (basic and acidic residues) spans 51 to 63 (NNAINSEAEKSVS). 3 positions are modified to phosphoserine: serine 56, serine 61, and serine 63. The span at 83–101 (KKAKNKKKKKKQQKKKKVT) shows a compositional bias: basic residues. Residues 102–122 (GKRDLDNQSSDNEKLEGLESS) are compositionally biased toward basic and acidic residues. A phosphoserine mark is found at serine 110 and serine 111.

This sequence belongs to the TCF25 family. Component of the ribosome quality control complex (RQC), composed of the E3 ubiquitin ligase rkr1/ltn1, rqc1 and mtr1/rqc2, as well as cdc48 and its ubiquitin-binding cofactors. RQC forms a stable complex with 60S ribosomal subunits.

It is found in the cytoplasm. Its function is as follows. Component of the ribosome quality control complex (RQC), a ribosome-associated complex that mediates ubiquitination and extraction of incompletely synthesized nascent chains for proteasomal degradation. Within the RQC complex, rqc1 is essential for the recruitment of cdc48 to incompletely synthesized nascent polypeptides that are ubiquitinated by rkr1/ltn1. In Schizosaccharomyces pombe (strain 972 / ATCC 24843) (Fission yeast), this protein is Ribosome quality control complex subunit 1.